Reading from the N-terminus, the 196-residue chain is MEVILLERVAKLGQMGEIVKVKDGFARNFLLKRKKALRATAENKAKYEGMKAELEANNIKAKGEAAKVAEKIDGRDIVVIRQASESGQLFGSVSVRDIVDALAADGITVSRPQVWLDAPIKTIGQQKVTIAIHPEVETSVTVTVARSADEAERIKRGEDISTRQEDRDAAAEAIAAAGEFFDPEAQEEAAGEPAAQ.

This sequence belongs to the bacterial ribosomal protein bL9 family.

Functionally, binds to the 23S rRNA. This chain is Large ribosomal subunit protein bL9, found in Bradyrhizobium sp. (strain ORS 278).